A 162-amino-acid chain; its full sequence is MAAEPGGWLGPALGLRLLLATALQMVSAFGAEFSSESCRELGFSSNLLCGSCDLLGQFDLLQLDPDCRGCCQEEAQFETKKLYAGAILEVCGUKLGRFPQVQAFVRSDKPKLFRGLQIKYVRGSDPVLKLLDDNGNIAEELSILKWNTDSVEEFLSEKLQRV.

The signal sequence occupies residues 1-28 (MAAEPGGWLGPALGLRLLLATALQMVSA). Residue selenocysteine 93 is a non-standard amino acid, selenocysteine.

The protein belongs to the selenoprotein M/F family. As to quaternary structure, forms a tight complex with UGGT1/UGCGL1. Interacts with UGGT2/UGCGL2. Interacts with RDH11.

The protein localises to the endoplasmic reticulum lumen. In terms of biological role, may be involved in redox reactions associated with the formation of disulfide bonds. May contribute to the quality control of protein folding in the endoplasmic reticulum. May regulate protein folding by enhancing the catalytic activity of UGGT1/UGCGL1 and UGGT2/UGCGL2. The protein is Selenoprotein F of Sus scrofa (Pig).